The primary structure comprises 283 residues: Shikimate kinase (283 aa).

ATP is bound at residue 86 to 96 (PIKSGLSSSSA).

Belongs to the GHMP kinase family. Archaeal shikimate kinase subfamily.

It localises to the cytoplasm. It carries out the reaction shikimate + ATP = 3-phosphoshikimate + ADP + H(+). Its pathway is metabolic intermediate biosynthesis; chorismate biosynthesis; chorismate from D-erythrose 4-phosphate and phosphoenolpyruvate: step 5/7. The polypeptide is Shikimate kinase (Methanococcus maripaludis (strain C6 / ATCC BAA-1332)).